The following is a 184-amino-acid chain: Probable chemoreceptor glutamine deamidase CheD (184 aa).

Belongs to the CheD family.

The enzyme catalyses L-glutaminyl-[protein] + H2O = L-glutamyl-[protein] + NH4(+). Functionally, probably deamidates glutamine residues to glutamate on methyl-accepting chemotaxis receptors (MCPs), playing an important role in chemotaxis. The protein is Probable chemoreceptor glutamine deamidase CheD of Rhizobium johnstonii (strain DSM 114642 / LMG 32736 / 3841) (Rhizobium leguminosarum bv. viciae).